Consider the following 1642-residue polypeptide: Mitochondrial 3' processome subunit 2 (1642 aa).

The N-terminal 27 residues, 1–27, are a transit peptide targeting the mitochondrion; it reads MGLPFLCHTRVCLFSNKIPFVLCGSRF. Disordered stretches follow at residues 43 to 69 and 745 to 772; these read ETLN…PQKK and KGEK…LSGP. Over residues 49 to 65 the composition is skewed to polar residues; that stretch reads ELSSPSTSKEPSVGSDS.

As to quaternary structure, component of the mitochondrial 3' processome (MPsome) complex composed at least of terminal uridylyltransferase KRET1/TUT1, 3'-5' exonuclease DSS1, MPSS1, MPSS2 and MPSS3. Within the complex, interacts with DSS1.

The protein localises to the mitochondrion. In terms of biological role, as part of the mitochondrial 3' processome (MPsome), involved in the maturation of guided RNA (gRNA) precursors. This is Mitochondrial 3' processome subunit 2 from Trypanosoma brucei brucei.